The primary structure comprises 124 residues: Replication restart protein PriB (124 aa).

Positions 12–112 (IDNCLILSGS…VHAEHIEFID (101 aa)) constitute an SSB domain.

The protein belongs to the PriB family. As to quaternary structure, homodimer. Interacts with PriA and DnaT. Component of the replication restart primosome. Primosome assembly occurs via a 'hand-off' mechanism. PriA binds to replication forks, subsequently PriB then DnaT bind; DnaT then displaces ssDNA to generate the helicase loading substrate.

Involved in the restart of stalled replication forks, which reloads the replicative helicase on sites other than the origin of replication; the PriA-PriB pathway is the major replication restart pathway. During primosome assembly it facilitates complex formation between PriA and DnaT on DNA; stabilizes PriA on DNA. Stimulates the DNA unwinding activity of PriA helicase. The sequence is that of Replication restart protein PriB from Actinobacillus pleuropneumoniae serotype 5b (strain L20).